A 169-amino-acid polypeptide reads, in one-letter code: Crossover junction endodeoxyribonuclease RuvC (169 aa).

Catalysis depends on residues D11, E71, and D143. Mg(2+) contacts are provided by D11, E71, and D143.

The protein belongs to the RuvC family. Homodimer which binds Holliday junction (HJ) DNA. The HJ becomes 2-fold symmetrical on binding to RuvC with unstacked arms; it has a different conformation from HJ DNA in complex with RuvA. In the full resolvosome a probable DNA-RuvA(4)-RuvB(12)-RuvC(2) complex forms which resolves the HJ. The cofactor is Mg(2+).

It localises to the cytoplasm. It carries out the reaction Endonucleolytic cleavage at a junction such as a reciprocal single-stranded crossover between two homologous DNA duplexes (Holliday junction).. Its function is as follows. The RuvA-RuvB-RuvC complex processes Holliday junction (HJ) DNA during genetic recombination and DNA repair. Endonuclease that resolves HJ intermediates. Cleaves cruciform DNA by making single-stranded nicks across the HJ at symmetrical positions within the homologous arms, yielding a 5'-phosphate and a 3'-hydroxyl group; requires a central core of homology in the junction. The consensus cleavage sequence is 5'-(A/T)TT(C/G)-3'. Cleavage occurs on the 3'-side of the TT dinucleotide at the point of strand exchange. HJ branch migration catalyzed by RuvA-RuvB allows RuvC to scan DNA until it finds its consensus sequence, where it cleaves and resolves the cruciform DNA. This is Crossover junction endodeoxyribonuclease RuvC from Rhizobium etli (strain CIAT 652).